Here is a 302-residue protein sequence, read N- to C-terminus: Elongation factor Ts (302 aa).

The tract at residues 80-83 (TDFV) is involved in Mg(2+) ion dislocation from EF-Tu.

The protein belongs to the EF-Ts family.

The protein localises to the cytoplasm. Associates with the EF-Tu.GDP complex and induces the exchange of GDP to GTP. It remains bound to the aminoacyl-tRNA.EF-Tu.GTP complex up to the GTP hydrolysis stage on the ribosome. This chain is Elongation factor Ts, found in Gluconobacter oxydans (strain 621H) (Gluconobacter suboxydans).